The chain runs to 367 residues: Voltage-gated potassium channel subunit beta-2 (367 aa).

Residues Ser9, Ser14, and Ser20 each carry the phosphoserine modification. Residue Arg28 is modified to Asymmetric dimethylarginine; alternate. Arg28 bears the Omega-N-methylarginine; alternate mark. The residue at position 31 (Ser31) is a Phosphoserine. NADP(+) is bound by residues Thr56, Trp57, Gln63, and Asp85. Residue Tyr90 is the Proton donor/acceptor of the active site. A Phosphoserine modification is found at Ser112. Lys124 is modified (N6-acetyllysine). 18 residues coordinate NADP(+): Asn158, Ser188, Arg189, Gln214, Trp243, Ser244, Pro245, Leu246, Ala247, Cys248, Lys254, Tyr262, Arg264, Gly323, Ser325, Gln329, Glu332, and Asn333.

The protein belongs to the shaker potassium channel beta subunit family. Homotetramer. Interaction with tetrameric potassium channel alpha subunits gives rise to a heterooctamer. Identified in potassium channel complexes containing KCNA1, KCNA2, KCNA4, KCNA5, KCNA6, KCNAB1, KCNAB2 and KCND3. Interacts (in unphosphorylated form) with MAPRE1. Forms a ternary complex with SQSTM1 and PRKCZ. Phosphorylated by PRKCZ; may be regulated by incorporation in a complex composed of PRKCZ and SQSTM1. Detected in the juxtaparanodal region of nodes of Ranvier in myelinated nerve fibers in the spinal cord (at protein level).

It localises to the cytoplasm. It is found in the membrane. The protein localises to the cell membrane. The protein resides in the cell projection. Its subcellular location is the axon. It localises to the synapse. It is found in the synaptosome. The protein localises to the cytoskeleton. The catalysed reaction is hydroxyacetone + NADP(+) = methylglyoxal + NADPH + H(+). It carries out the reaction (E)-4-oxonon-2-en-1-ol + NADP(+) = (E)-4-oxonon-2-enal + NADPH + H(+). In terms of biological role, regulatory subunit of the voltage-gated potassium (Kv) Shaker channels composed of pore-forming and potassium-conducting alpha subunits and of regulatory beta subunits. The beta-2/KCNAB2 cytoplasmic subunit promotes potassium channel closure via a mechanism that does not involve physical obstruction of the channel pore. Promotes the inactivation of Kv1.4/KCNA4 and Kv1.5/KCNA5 alpha subunit-containing channels. Displays nicotinamide adenine dinucleotide phosphate (NADPH)-dependent aldoketoreductase activity by catalyzing the NADPH-dependent reduction of a wide range of aldehyde and ketone substrates. Substrate specificity includes methylglyoxal, 9,10-phenanthrenequinone, prostaglandin J2, 4-nitrobenzaldehyde, 4-nitroacetophenone and 4-oxo-trans-2-nonenal (in vitro, no physiological substrate identified yet). The binding of oxidized and reduced nucleotide alters Kv channel gating and may contribute to dynamic fine tuning of cell excitability. Contributes to the regulation of nerve signaling, and prevents neuronal hyperexcitability. This chain is Voltage-gated potassium channel subunit beta-2 (KCNAB2), found in Bos taurus (Bovine).